We begin with the raw amino-acid sequence, 247 residues long: Caffeoyl-CoA O-methyltransferase 2 (247 aa).

Lysine 21 is a substrate binding site. S-adenosyl-L-methionine is bound by residues threonine 63, glutamate 85, 87 to 88 (GV), serine 93, aspartate 111, and alanine 140. Aspartate 163 contributes to the substrate binding site. Position 163 (aspartate 163) interacts with a divalent metal cation. Aspartate 165 contributes to the S-adenosyl-L-methionine binding site. 2 residues coordinate a divalent metal cation: aspartate 189 and asparagine 190. Asparagine 194 contributes to the substrate binding site.

This sequence belongs to the class I-like SAM-binding methyltransferase superfamily. Cation-dependent O-methyltransferase family. CCoAMT subfamily. A divalent metal cation serves as cofactor.

The catalysed reaction is (E)-caffeoyl-CoA + S-adenosyl-L-methionine = (E)-feruloyl-CoA + S-adenosyl-L-homocysteine + H(+). It functions in the pathway aromatic compound metabolism; phenylpropanoid biosynthesis. Methylates caffeoyl-CoA to feruloyl-CoA and 5-hydroxyferuloyl-CoA to sinapoyl-CoA. Plays a role in the synthesis of feruloylated polysaccharides. Involved in the reinforcement of the plant cell wall. Also involved in the responding to wounding or pathogen challenge by the increased formation of cell wall-bound ferulic acid polymers. This Populus trichocarpa (Western balsam poplar) protein is Caffeoyl-CoA O-methyltransferase 2 (CCOAOMT2).